The sequence spans 277 residues: Large ribosomal subunit protein uL2 (277 aa).

Residues 219-277 are disordered; that stretch reads RPQTRGSAMNPVDHPHGGGEGKKNSGRHPVTPWGKPTKGAKTRRKKASDKLIISRRKGK. Residues 231–241 are compositionally biased toward basic and acidic residues; the sequence is DHPHGGGEGKK. The segment covering 256–277 has biased composition (basic residues); that stretch reads KGAKTRRKKASDKLIISRRKGK.

The protein belongs to the universal ribosomal protein uL2 family. As to quaternary structure, part of the 50S ribosomal subunit. Forms a bridge to the 30S subunit in the 70S ribosome.

One of the primary rRNA binding proteins. Required for association of the 30S and 50S subunits to form the 70S ribosome, for tRNA binding and peptide bond formation. It has been suggested to have peptidyltransferase activity; this is somewhat controversial. Makes several contacts with the 16S rRNA in the 70S ribosome. The chain is Large ribosomal subunit protein uL2 from Campylobacter curvus (strain 525.92).